Reading from the N-terminus, the 105-residue chain is MSCGEPHETDCSEILDHLYEFLDKEMPDSDCVKFEHHFEECSPCLEKYGLEQAVKKLVKRCCGQDDVPGDLRAKVMGRLDLIRSGQSVPEHDVAAAPSSSAPQES.

Zn(2+)-binding residues include Cys-11, His-37, Cys-41, and Cys-44. A disulfide bridge connects residues Cys-11 and Cys-44. Positions 33 to 47 are contributes to redox-sensitivity; sequence KFEHHFEECSPCLEK. The tract at residues 86–105 is disordered; it reads QSVPEHDVAAAPSSSAPQES. A compositionally biased stretch (low complexity) spans 94–105; sequence AAAPSSSAPQES.

It belongs to the zinc-associated anti-sigma factor (ZAS) superfamily. Interacts with cognate sigma factor SigR under reducing but not oxiding conditions. Treatment with the thiol-oxidzing agent diamide inhibits the interaction, while incubation with thioredoxin (trxA) stimulates the interaction. Requires Zn(2+) as cofactor. Under oxidizing conditions up to 3 disulfide bonds are formed. A single disulfide bond inhibits binding to SigR. Cys-11 forms a disulfide bond with either Cys-44 (the major bind) or Cys-41 (a minor bond).

Functionally, a redox-regulated anti-sigma factor for extracytoplasmic function (ECF) sigma factor SigR, and a key sensor of disulfide stress. Holds SigR, its cognate ECF sigma factor, in an inactive form, inhibiting its sigma activity under reducing but not oxidizing conditions; oxidation and reduction of the anti-sigma factor is reversible. Mycothiol (MSH) is competent for reduction of RsrA, allowing it to bind to SigR. In conjunction with its cognate sigma factor SigR may sense the intracellular level of reduced MSH. Probably releases SigR during oxidative stress. In Streptomyces coelicolor (strain ATCC BAA-471 / A3(2) / M145), this protein is Anti-sigma factor RsrA (rsrA).